Reading from the N-terminus, the 396-residue chain is Enoyl-[acyl-carrier-protein] reductase [NADH] (396 aa).

NAD(+)-binding positions include 48–53, 74–75, 111–112, and 139–140; these read GASTGY, FE, DA, and LA. Residue tyrosine 225 participates in substrate binding. Catalysis depends on tyrosine 235, which acts as the Proton donor. NAD(+) is bound by residues lysine 244 and 273 to 275; that span reads VVT.

The protein belongs to the TER reductase family. In terms of assembly, monomer.

It carries out the reaction a 2,3-saturated acyl-[ACP] + NAD(+) = a (2E)-enoyl-[ACP] + NADH + H(+). It functions in the pathway lipid metabolism; fatty acid biosynthesis. Functionally, involved in the final reduction of the elongation cycle of fatty acid synthesis (FAS II). Catalyzes the reduction of a carbon-carbon double bond in an enoyl moiety that is covalently linked to an acyl carrier protein (ACP). This is Enoyl-[acyl-carrier-protein] reductase [NADH] from Teredinibacter turnerae (strain ATCC 39867 / T7901).